Consider the following 266-residue polypeptide: Hydroxyethylthiazole kinase (266 aa).

Position 43 (Met43) interacts with substrate. Residues Arg119 and Thr166 each coordinate ATP. Gly193 serves as a coordination point for substrate.

The protein belongs to the Thz kinase family. Mg(2+) is required as a cofactor.

The catalysed reaction is 5-(2-hydroxyethyl)-4-methylthiazole + ATP = 4-methyl-5-(2-phosphooxyethyl)-thiazole + ADP + H(+). The protein operates within cofactor biosynthesis; thiamine diphosphate biosynthesis; 4-methyl-5-(2-phosphoethyl)-thiazole from 5-(2-hydroxyethyl)-4-methylthiazole: step 1/1. In terms of biological role, catalyzes the phosphorylation of the hydroxyl group of 4-methyl-5-beta-hydroxyethylthiazole (THZ). This chain is Hydroxyethylthiazole kinase, found in Methanococcus vannielii (strain ATCC 35089 / DSM 1224 / JCM 13029 / OCM 148 / SB).